The following is a 149-amino-acid chain: UPF0260 protein PFL_1499 (149 aa).

It belongs to the UPF0260 family.

The chain is UPF0260 protein PFL_1499 from Pseudomonas fluorescens (strain ATCC BAA-477 / NRRL B-23932 / Pf-5).